The following is a 263-amino-acid chain: Ribonuclease HII (263 aa).

Residues 74 to 262 (EHVAGLDEVG…VQETAATRQT (189 aa)) enclose the RNase H type-2 domain. A divalent metal cation-binding residues include aspartate 80, glutamate 81, and aspartate 172.

It belongs to the RNase HII family. It depends on Mn(2+) as a cofactor. Mg(2+) is required as a cofactor.

It localises to the cytoplasm. It carries out the reaction Endonucleolytic cleavage to 5'-phosphomonoester.. Functionally, endonuclease that specifically degrades the RNA of RNA-DNA hybrids. This is Ribonuclease HII (rnhB) from Halalkalibacterium halodurans (strain ATCC BAA-125 / DSM 18197 / FERM 7344 / JCM 9153 / C-125) (Bacillus halodurans).